A 355-amino-acid polypeptide reads, in one-letter code: Hydroxylysine kinase (355 aa).

The active-site Proton acceptor is the D215.

The protein belongs to the aminoglycoside phosphotransferase family.

Its subcellular location is the cytoplasm. The enzyme catalyses (5R)-5-hydroxy-L-lysine + GTP = (5R)-5-phosphooxy-L-lysine + GDP + H(+). In terms of biological role, catalyzes the GTP-dependent phosphorylation of 5-hydroxy-L-lysine. This is Hydroxylysine kinase (hykk) from Danio rerio (Zebrafish).